Reading from the N-terminus, the 212-residue chain is Peptide methionine sulfoxide reductase MsrA (212 aa).

The active site involves Cys-52.

Belongs to the MsrA Met sulfoxide reductase family.

The enzyme catalyses L-methionyl-[protein] + [thioredoxin]-disulfide + H2O = L-methionyl-(S)-S-oxide-[protein] + [thioredoxin]-dithiol. It catalyses the reaction [thioredoxin]-disulfide + L-methionine + H2O = L-methionine (S)-S-oxide + [thioredoxin]-dithiol. Functionally, has an important function as a repair enzyme for proteins that have been inactivated by oxidation. Catalyzes the reversible oxidation-reduction of methionine sulfoxide in proteins to methionine. This is Peptide methionine sulfoxide reductase MsrA from Escherichia fergusonii (strain ATCC 35469 / DSM 13698 / CCUG 18766 / IAM 14443 / JCM 21226 / LMG 7866 / NBRC 102419 / NCTC 12128 / CDC 0568-73).